A 1024-amino-acid chain; its full sequence is Multidrug resistance protein MdtC (1024 aa).

12 helical membrane passes run 12–32 (VATT…FSLL), 333–353 (EVER…FLFL), 360–380 (LIPA…MYLC), 387–407 (LSLM…IVVL), 431–451 (VGFT…PLLL), 463–483 (FAVT…TLTP), 528–548 (WVMV…ISIP), 853–873 (LWLI…LYES), 875–895 (VHPL…LLAL), 897–917 (LFDA…IGIV), 953–973 (PILM…ISSG), and 984–1004 (ITIV…TPVV).

Belongs to the resistance-nodulation-cell division (RND) (TC 2.A.6) family. MdtC subfamily. In terms of assembly, part of a tripartite efflux system composed of MdtA, MdtB and MdtC. MdtC forms a heteromultimer with MdtB.

It is found in the cell inner membrane. The chain is Multidrug resistance protein MdtC from Yersinia enterocolitica serotype O:8 / biotype 1B (strain NCTC 13174 / 8081).